Here is a 310-residue protein sequence, read N- to C-terminus: Methionyl-tRNA formyltransferase (310 aa).

Residue 109-112 coordinates (6S)-5,6,7,8-tetrahydrofolate; the sequence is SLLP.

The protein belongs to the Fmt family.

It catalyses the reaction L-methionyl-tRNA(fMet) + (6R)-10-formyltetrahydrofolate = N-formyl-L-methionyl-tRNA(fMet) + (6S)-5,6,7,8-tetrahydrofolate + H(+). Attaches a formyl group to the free amino group of methionyl-tRNA(fMet). The formyl group appears to play a dual role in the initiator identity of N-formylmethionyl-tRNA by promoting its recognition by IF2 and preventing the misappropriation of this tRNA by the elongation apparatus. The protein is Methionyl-tRNA formyltransferase of Staphylococcus epidermidis (strain ATCC 12228 / FDA PCI 1200).